Consider the following 544-residue polypeptide: Dynein intermediate chain 1 (544 aa).

WD repeat units follow at residues 241-281 (KARS…YPVS), 289-330 (GHLE…RPSE), 342-387 (SQCI…QPSN), 402-441 (VMTS…NQHE), 461-501 (THKA…EAPV), and 506-544 (PDGK…NLAN).

The protein belongs to the dynein intermediate chain family.

The protein localises to the cytoplasm. Its function is as follows. Has a role in meiotic nuclear divsion where it promotes the movement of 'horsetails'. This is Dynein intermediate chain 1 (dic1) from Schizosaccharomyces pombe (strain 972 / ATCC 24843) (Fission yeast).